Here is a 221-residue protein sequence, read N- to C-terminus: ATP phosphoribosyltransferase (221 aa).

Belongs to the ATP phosphoribosyltransferase family. Short subfamily. As to quaternary structure, heteromultimer composed of HisG and HisZ subunits.

The protein resides in the cytoplasm. The catalysed reaction is 1-(5-phospho-beta-D-ribosyl)-ATP + diphosphate = 5-phospho-alpha-D-ribose 1-diphosphate + ATP. It functions in the pathway amino-acid biosynthesis; L-histidine biosynthesis; L-histidine from 5-phospho-alpha-D-ribose 1-diphosphate: step 1/9. In terms of biological role, catalyzes the condensation of ATP and 5-phosphoribose 1-diphosphate to form N'-(5'-phosphoribosyl)-ATP (PR-ATP). Has a crucial role in the pathway because the rate of histidine biosynthesis seems to be controlled primarily by regulation of HisG enzymatic activity. The sequence is that of ATP phosphoribosyltransferase from Anaeromyxobacter sp. (strain K).